A 144-amino-acid chain; its full sequence is Large ribosomal subunit protein uL15 (144 aa).

The segment at 1-45 (MNLNTLSPDPGSRPSRRRVGRGIGSGLGKTCGKGHKGQKSRAGGY) is disordered. A compositionally biased stretch (gly residues) spans 21–31 (RGIGSGLGKTC).

It belongs to the universal ribosomal protein uL15 family. Part of the 50S ribosomal subunit.

Functionally, binds to the 23S rRNA. The chain is Large ribosomal subunit protein uL15 from Legionella pneumophila (strain Corby).